The chain runs to 348 residues: [LysW]-L-2-aminoadipate 6-phosphate reductase (348 aa).

14–17 (SGYA) contacts NADP(+). Residue C151 is part of the active site. N315 contributes to the NADP(+) binding site.

It belongs to the NAGSA dehydrogenase family. Type 1 subfamily. LysY sub-subfamily.

Its subcellular location is the cytoplasm. It carries out the reaction [amino-group carrier protein]-C-terminal-N-(1-carboxy-5-oxopentan-1-yl)-L-glutamine + phosphate + NADP(+) = [amino-group carrier protein]-C-terminal-N-(1-carboxy-5-phosphooxy-5-oxopentan-1-yl)-L-glutamine + NADPH + H(+). It functions in the pathway amino-acid biosynthesis; L-lysine biosynthesis via AAA pathway; L-lysine from L-alpha-aminoadipate (Thermus route): step 3/5. Functionally, catalyzes the NADPH-dependent reduction of [LysW]-aminoadipate 6-phosphate to yield [LysW]-aminoadipate 6-semialdehyde. In Deinococcus radiodurans (strain ATCC 13939 / DSM 20539 / JCM 16871 / CCUG 27074 / LMG 4051 / NBRC 15346 / NCIMB 9279 / VKM B-1422 / R1), this protein is [LysW]-L-2-aminoadipate 6-phosphate reductase.